Reading from the N-terminus, the 235-residue chain is Aspartate/glutamate leucyltransferase (235 aa).

It belongs to the R-transferase family. Bpt subfamily.

It is found in the cytoplasm. The catalysed reaction is N-terminal L-glutamyl-[protein] + L-leucyl-tRNA(Leu) = N-terminal L-leucyl-L-glutamyl-[protein] + tRNA(Leu) + H(+). The enzyme catalyses N-terminal L-aspartyl-[protein] + L-leucyl-tRNA(Leu) = N-terminal L-leucyl-L-aspartyl-[protein] + tRNA(Leu) + H(+). Its function is as follows. Functions in the N-end rule pathway of protein degradation where it conjugates Leu from its aminoacyl-tRNA to the N-termini of proteins containing an N-terminal aspartate or glutamate. In Pseudomonas putida (strain ATCC 47054 / DSM 6125 / CFBP 8728 / NCIMB 11950 / KT2440), this protein is Aspartate/glutamate leucyltransferase.